Consider the following 1588-residue polypeptide: Pentafunctional AROM polypeptide (1588 aa).

Positions 1 to 392 (MVQLAKVPIL…YGDSAQFVSD (392 aa)) are 3-dehydroquinate synthase. NAD(+) contacts are provided by residues 43–45 (DTN), 78–81 (ETSK), 109–111 (GGV), and Asp114. Arg125 contributes to the 7-phospho-2-dehydro-3-deoxy-D-arabino-heptonate binding site. An NAD(+)-binding site is contributed by 134–135 (TS). Positions 141 and 147 each coordinate 7-phospho-2-dehydro-3-deoxy-D-arabino-heptonate. An NAD(+)-binding site is contributed by Lys156. Asn157 lines the 7-phospho-2-dehydro-3-deoxy-D-arabino-heptonate pocket. NAD(+) contacts are provided by residues 174–177 (WLET) and Asn185. Position 189 (Glu189) interacts with Zn(2+). 7-phospho-2-dehydro-3-deoxy-D-arabino-heptonate is bound by residues 189 to 192 (EVIK) and Lys258. The active-site Proton acceptor; for 3-dehydroquinate synthase activity is Glu268. Residues 272–276 (RNLLN) and His279 contribute to the 7-phospho-2-dehydro-3-deoxy-D-arabino-heptonate site. His279 contributes to the Zn(2+) binding site. His283 (proton acceptor; for 3-dehydroquinate synthase activity) is an active-site residue. 7-phospho-2-dehydro-3-deoxy-D-arabino-heptonate contacts are provided by His295 and Lys364. Residue His295 coordinates Zn(2+). Residues 405–871 (VYPFKDIPAD…WDVLHSELGA (467 aa)) are EPSP synthase. Cys853 (for EPSP synthase activity) is an active-site residue. A shikimate kinase region spans residues 890–1080 (SVVIIGMRAA…IPSGRSAFVC (191 aa)). Residue 895 to 902 (GMRAAGKT) participates in ATP binding. A 3-dehydroquinase region spans residues 1081-1293 (LTFDDLTEQT…AAPGQLTVAQ (213 aa)). The active-site Proton acceptor; for 3-dehydroquinate dehydratase activity is His1198. The active-site Schiff-base intermediate with substrate; for 3-dehydroquinate dehydratase activity is the Lys1227. Residues 1306 to 1588 (PKELFVVGKP…KAIFDAVTKE (283 aa)) form a shikimate dehydrogenase region.

This sequence in the N-terminal section; belongs to the sugar phosphate cyclases superfamily. Dehydroquinate synthase family. The protein in the 2nd section; belongs to the EPSP synthase family. In the 3rd section; belongs to the shikimate kinase family. It in the 4th section; belongs to the type-I 3-dehydroquinase family. This sequence in the C-terminal section; belongs to the shikimate dehydrogenase family. Homodimer. Zn(2+) is required as a cofactor.

It is found in the cytoplasm. It catalyses the reaction 7-phospho-2-dehydro-3-deoxy-D-arabino-heptonate = 3-dehydroquinate + phosphate. It carries out the reaction 3-dehydroquinate = 3-dehydroshikimate + H2O. The catalysed reaction is shikimate + NADP(+) = 3-dehydroshikimate + NADPH + H(+). The enzyme catalyses shikimate + ATP = 3-phosphoshikimate + ADP + H(+). It catalyses the reaction 3-phosphoshikimate + phosphoenolpyruvate = 5-O-(1-carboxyvinyl)-3-phosphoshikimate + phosphate. It participates in metabolic intermediate biosynthesis; chorismate biosynthesis; chorismate from D-erythrose 4-phosphate and phosphoenolpyruvate: step 2/7. The protein operates within metabolic intermediate biosynthesis; chorismate biosynthesis; chorismate from D-erythrose 4-phosphate and phosphoenolpyruvate: step 3/7. Its pathway is metabolic intermediate biosynthesis; chorismate biosynthesis; chorismate from D-erythrose 4-phosphate and phosphoenolpyruvate: step 4/7. It functions in the pathway metabolic intermediate biosynthesis; chorismate biosynthesis; chorismate from D-erythrose 4-phosphate and phosphoenolpyruvate: step 5/7. It participates in metabolic intermediate biosynthesis; chorismate biosynthesis; chorismate from D-erythrose 4-phosphate and phosphoenolpyruvate: step 6/7. Functionally, the AROM polypeptide catalyzes 5 consecutive enzymatic reactions in prechorismate polyaromatic amino acid biosynthesis. In Saccharomyces cerevisiae (strain YJM789) (Baker's yeast), this protein is Pentafunctional AROM polypeptide.